The primary structure comprises 270 residues: 3-methyl-2-oxobutanoate hydroxymethyltransferase (270 aa).

Aspartate 43 and aspartate 82 together coordinate Mg(2+). 3-methyl-2-oxobutanoate-binding positions include 43–44 (DS), aspartate 82, and lysine 112. Glutamate 114 provides a ligand contact to Mg(2+). Glutamate 179 acts as the Proton acceptor in catalysis.

This sequence belongs to the PanB family. As to quaternary structure, homodecamer; pentamer of dimers. The cofactor is Mg(2+).

It localises to the cytoplasm. It carries out the reaction 3-methyl-2-oxobutanoate + (6R)-5,10-methylene-5,6,7,8-tetrahydrofolate + H2O = 2-dehydropantoate + (6S)-5,6,7,8-tetrahydrofolate. Its pathway is cofactor biosynthesis; (R)-pantothenate biosynthesis; (R)-pantoate from 3-methyl-2-oxobutanoate: step 1/2. Its function is as follows. Catalyzes the reversible reaction in which hydroxymethyl group from 5,10-methylenetetrahydrofolate is transferred onto alpha-ketoisovalerate to form ketopantoate. The protein is 3-methyl-2-oxobutanoate hydroxymethyltransferase of Oceanobacillus iheyensis (strain DSM 14371 / CIP 107618 / JCM 11309 / KCTC 3954 / HTE831).